The chain runs to 208 residues: Interleukin-6 (208 aa).

The N-terminal stretch at 1–29 (MNSLFTSAFSPLAVSLGLLLVMTSAFPTP) is a signal peptide. N-linked (GlcNAc...) asparagine glycosylation occurs at N38. C72 and C78 form a disulfide bridge. S81 is subject to Phosphoserine. A disulfide bridge connects residues C101 and C111.

Belongs to the IL-6 superfamily. As to quaternary structure, component of a hexamer of two molecules each of IL6, IL6R and IL6ST; first binds to IL6R to associate with the signaling subunit IL6ST. Interacts with IL6R (via the N-terminal ectodomain); this interaction may be affected by IL6R-binding with SORL1, hence decreasing IL6 cis signaling. Interacts with SORL1 (via the N-terminal ectodomain); this interaction leads to IL6 internalization and lysosomal degradation. May form a trimeric complex with the soluble SORL1 ectodomain and soluble IL6R receptor; this interaction might stabilize circulating IL6, hence promoting IL6 trans signaling.

The protein localises to the secreted. In terms of biological role, cytokine with a wide variety of biological functions in immunity, tissue regeneration, and metabolism. Binds to IL6R, then the complex associates to the signaling subunit IL6ST/gp130 to trigger the intracellular IL6-signaling pathway. The interaction with the membrane-bound IL6R and IL6ST stimulates 'classic signaling', whereas the binding of IL6 and soluble IL6R to IL6ST stimulates 'trans-signaling'. Alternatively, 'cluster signaling' occurs when membrane-bound IL6:IL6R complexes on transmitter cells activate IL6ST receptors on neighboring receiver cells. IL6 is a potent inducer of the acute phase response. Rapid production of IL6 contributes to host defense during infection and tissue injury, but excessive IL6 synthesis is involved in disease pathology. In the innate immune response, is synthesized by myeloid cells, such as macrophages and dendritic cells, upon recognition of pathogens through toll-like receptors (TLRs) at the site of infection or tissue injury. In the adaptive immune response, is required for the differentiation of B cells into immunoglobulin-secreting cells. Plays a major role in the differentiation of CD4(+) T cell subsets. Essential factor for the development of T follicular helper (Tfh) cells that are required for the induction of germinal-center formation. Required to drive naive CD4(+) T cells to the Th17 lineage. Also required for proliferation of myeloma cells and the survival of plasmablast cells. Its function is as follows. Acts as an essential factor in bone homeostasis and on vessels directly or indirectly by induction of VEGF, resulting in increased angiogenesis activity and vascular permeability. Induces, through 'trans-signaling' and synergistically with IL1B and TNF, the production of VEGF. Involved in metabolic controls, is discharged into the bloodstream after muscle contraction increasing lipolysis and improving insulin resistance. 'Trans-signaling' in central nervous system also regulates energy and glucose homeostasis. Mediates, through GLP-1, crosstalk between insulin-sensitive tissues, intestinal L cells and pancreatic islets to adapt to changes in insulin demand. Also acts as a myokine. Plays a protective role during liver injury, being required for maintenance of tissue regeneration. Also has a pivotal role in iron metabolism by regulating HAMP/hepcidin expression upon inflammation or bacterial infection. Through activation of IL6ST-YAP-NOTCH pathway, induces inflammation-induced epithelial regeneration. The chain is Interleukin-6 (IL6) from Capra hircus (Goat).